The chain runs to 203 residues: Small ribosomal subunit protein uS7 (203 aa).

The tract at residues 1–21 (MSSEAPEPDAPASTDDERVSA) is disordered.

It belongs to the universal ribosomal protein uS7 family. Part of the 30S ribosomal subunit.

Its function is as follows. One of the primary rRNA binding proteins, it binds directly to 16S rRNA where it nucleates assembly of the head domain of the 30S subunit. Is located at the subunit interface close to the decoding center. The protein is Small ribosomal subunit protein uS7 of Natronomonas pharaonis (strain ATCC 35678 / DSM 2160 / CIP 103997 / JCM 8858 / NBRC 14720 / NCIMB 2260 / Gabara) (Halobacterium pharaonis).